The chain runs to 1224 residues: Probable serine/threonine-protein kinase DDB_G0292350 (1224 aa).

Disordered regions lie at residues 57–98 (MSGS…STQR) and 252–284 (SSPSSSSSSIKTKNTTSTTTTTTTTKNLNDISN). Composition is skewed to low complexity over residues 58 to 74 (SGSIQSDLSSSDNFTSS) and 83 to 95 (SSSNTSNRNSDNS). 2 coiled-coil regions span residues 352–381 (LFKQQEKQHQQQQQQQQNQQDKEKFEKQNN) and 540–569 (DVQLSTKLNDEEETIEKEEEDLNSVDEYLT). Disordered stretches follow at residues 693–784 (QPIP…FVIT) and 815–836 (FTNNNNNNNGGSTITTTTTNNI). Low complexity predominate over residues 743–768 (NNNNNNNNNINNNNINNNNINNNKNG). Polar residues predominate over residues 772–784 (GETPSPSSSFVIT). The region spanning 935–1193 (FRDKIKLGTG…PEMLLHHTFL (259 aa)) is the Protein kinase domain. Residues 941–949 (LGTGAFGNV) and Lys-964 each bind ATP. Asp-1063 (proton acceptor) is an active-site residue.

It belongs to the protein kinase superfamily. Ser/Thr protein kinase family. It depends on Mg(2+) as a cofactor.

The catalysed reaction is L-seryl-[protein] + ATP = O-phospho-L-seryl-[protein] + ADP + H(+). It carries out the reaction L-threonyl-[protein] + ATP = O-phospho-L-threonyl-[protein] + ADP + H(+). The sequence is that of Probable serine/threonine-protein kinase DDB_G0292350 from Dictyostelium discoideum (Social amoeba).